We begin with the raw amino-acid sequence, 1020 residues long: Neurofilament heavy polypeptide (1020 aa).

The head stretch occupies residues 1–100 (MMSFGGADAL…VATSRSEKEQ (100 aa)). The tract at residues 58-83 (VSASPSRFRGAGAASSTDSLDTLSNG) is disordered. Residues 71–82 (ASSTDSLDTLSN) are compositionally biased toward polar residues. Ser-76 and Ser-124 each carry phosphoserine. The region spanning 97–413 (EKEQLQALND…KLLEGEECRI (317 aa)) is the IF rod domain. The tract at residues 101-132 (LQALNDRFAGYIDKVRQLEAHNRSLEGEAAAL) is coil 1A. Residues 133 to 145 (RQQQAGRSAMGEL) are linker 1. Residues 146-244 (YEREVREMRG…QEEVGELLGQ (99 aa)) form a coil 1B region. The tract at residues 245-266 (IQGSGAAQAQMQAETRDALKCD) is linker 12. A coil 2A region spans residues 267–288 (VTSALREIRAQLEGHAVQSTLQ). Positions 289–292 (SEEW) are linker 2. Positions 293–413 (FRVRLDRLSE…KLLEGEECRI (121 aa)) are coil 2B. Residues Ser-347 and Ser-421 each carry the phosphoserine modification. Positions 414 to 1020 (GFGPIPFSLP…ATEDKAAKGK (607 aa)) are tail. The tract at residues 456–1020 (IVEEQTEETQ…ATEDKAAKGK (565 aa)) is disordered. 2 stretches are compositionally biased toward acidic residues: residues 459 to 475 (EQTE…EEEE) and 483 to 498 (GKEE…EGGE). Ser-511, Ser-526, Ser-532, Ser-540, Ser-546, Ser-552, Ser-560, Ser-566, Ser-574, Ser-580, Ser-586, Ser-594, Ser-600, Ser-606, Ser-614, Ser-620, Ser-628, Ser-634, Ser-640, Ser-648, Ser-654, Ser-662, Ser-668, Ser-676, Ser-682, Ser-690, Ser-696, and Ser-704 each carry phosphoserine. The span at 511–1020 (SPEKEAKSPV…ATEDKAAKGK (510 aa)) shows a compositional bias: basic and acidic residues. 4 tandem repeats follow at residues 525–530 (KSPAEA), 531–536 (KSPEKE), 539–544 (KSPAEV), and 545–550 (KSPEKA). A 30 X 6 AA repeats of K-S-P-[AEPV]-[EAK]-[AEVK] region spans residues 525–826 (KSPAEAKSPE…KEEVKSPVKE (302 aa)). Residues 559–564 (KSPPEA) form repeat 5. 2 repeat units span residues 573–578 (KSPAEV) and 579–584 (KSPEKA). 2 consecutive repeat copies span residues 593 to 598 (KSPAEA) and 599 to 604 (KSPEKA). Copy 10 of the repeat occupies 613–618 (KSPAEA). 4 repeat units span residues 627-632 (KSPAEV), 633-638 (KSPEKA), 639-644 (KSPTKE), and 647-652 (KSPEKA). A run of 12 repeats spans residues 661–666 (KSPEKA), 667–672 (KSPVKA), 675–680 (KSPEKA), 681–686 (KSPVKA), 689–694 (KSPEKA), 695–700 (KSPVKE), 703–708 (KSPEKA), 709–714 (KSPVKE), 717–722 (KSPEKA), 723–728 (KSPVKE), 737–742 (KSPVKE), and 745–750 (KSPEKA). Residues Ser-718, Ser-724, and Ser-738 each carry the phosphoserine modification. 2 positions are modified to phosphoserine: Ser-752 and Ser-763. Copy 27 of the repeat occupies 762–767 (KSPEAK). Thr-768 carries the post-translational modification Phosphothreonine. 3 consecutive repeat copies span residues 786-791 (KSPVKE), 794-799 (KSPEKA), and 821-826 (KSPVKE). A phosphoserine mark is found at Ser-787, Ser-795, Ser-822, and Ser-888.

It belongs to the intermediate filament family. As to quaternary structure, forms heterodimers with NEFL; which can further hetero-oligomerize (in vitro). Forms heterodimers with INA (in vitro). In terms of processing, there are a number of repeats of the tripeptide K-S-P, NFH is phosphorylated on a number of the serines in this motif. It is thought that phosphorylation of NFH results in the formation of interfilament cross bridges that are important in the maintenance of axonal caliber. Post-translationally, phosphorylation seems to play a major role in the functioning of the larger neurofilament polypeptides (NF-M and NF-H), the levels of phosphorylation being altered developmentally and coincidentally with a change in the neurofilament function. Phosphorylated in the head and rod regions by the PKC kinase PKN1, leading to the inhibition of polymerization.

The protein localises to the cytoplasm. The protein resides in the cytoskeleton. Its subcellular location is the cell projection. It localises to the axon. Neurofilaments usually contain three intermediate filament proteins: NEFL, NEFM, and NEFH which are involved in the maintenance of neuronal caliber. NEFH has an important function in mature axons that is not subserved by the two smaller NF proteins. May additionally cooperate with the neuronal intermediate filament proteins PRPH and INA to form neuronal filamentous networks. The sequence is that of Neurofilament heavy polypeptide (NEFH) from Homo sapiens (Human).